The following is a 284-amino-acid chain: Ribose-5-phosphate isomerase (284 aa).

The protein belongs to the ribose 5-phosphate isomerase family.

It is found in the cytoplasm. It carries out the reaction aldehydo-D-ribose 5-phosphate = D-ribulose 5-phosphate. It functions in the pathway carbohydrate degradation; pentose phosphate pathway; D-ribose 5-phosphate from D-ribulose 5-phosphate (non-oxidative stage): step 1/1. The chain is Ribose-5-phosphate isomerase (RKI1) from Lodderomyces elongisporus (strain ATCC 11503 / CBS 2605 / JCM 1781 / NBRC 1676 / NRRL YB-4239) (Yeast).